A 2828-amino-acid chain; its full sequence is Matrix-remodeling-associated protein 5 (2828 aa).

Positions 1–26 are cleaved as a signal peptide; it reads MPKRAHWGALSVVLILLWGHPRVALA. In terms of domain architecture, LRRNT spans 27–55; sequence CPHPCACYVPSEVHCTFRSLASVPAGIAK. LRR repeat units lie at residues 56–77, 80–101, 104–125, 128–149, 152–173, and 184–205; these read HVER…SFAG, KLEL…ALRD, SLQV…TLQG, NLMR…AFNG, SLRL…TFST, and TIRH…MLRN. In terms of domain architecture, LRRCT spans 217–277; that stretch reads NPWTCDCEMR…HKLKDMTCLK (61 aa). 2 N-linked (GlcNAc...) asparagine glycosylation sites follow: N287 and N321. Ig-like C2-type domains lie at 481–571 and 575–669; these read PSGA…YRVL and PSTQ…ITVT. Cystine bridges form between C501-C555 and C599-C651. The N-linked (GlcNAc...) asparagine glycan is linked to N633. Disordered regions lie at residues 671–715, 933–962, 1068–1190, 1204–1275, and 1367–1389; these read KGSG…RRLL, KPTH…EYEP, QGGN…APDI, AWVD…SSET, and EESS…AQPG. Over residues 695–708 the composition is skewed to acidic residues; that stretch reads IVEDEGGSGMGDEE. S702 carries O-linked (Xyl...) (chondroitin sulfate) serine glycosylation. Positions 951 to 962 are enriched in low complexity; sequence SSPEPTSSEYEP. Residues 1090–1107 show a composition bias toward polar residues; that stretch reads SKSITLPDSTLGIMSSMS. Basic residues predominate over residues 1146-1168; that stretch reads PSRRRPNGRRRLRPNKFRHRHKQ. Polar residues-rich tracts occupy residues 1169–1190 and 1204–1214; these read TPPT…APDI and AWVDNTVNTPK. Residues 1229–1243 are compositionally biased toward basic residues; the sequence is TPRRKHGKRPNKHRY. N1403 is a glycosylation site (N-linked (GlcNAc...) asparagine). An LRR 7 repeat occupies 1410–1434; it reads LKELEDVDFTSEFLSSLTVSTPFHQ. Disordered regions lie at residues 1479 to 1499, 1536 to 1566, 1579 to 1603, 1669 to 1689, and 1700 to 1719; these read QNHT…PSTI, NPET…SDQD, QVFG…HASH, STTI…KFTD, and KVFG…KPPS. Residues 1542 to 1566 show a composition bias toward polar residues; sequence TPVNNEGTQHMSGPNELSTPSSDQD. An N-linked (GlcNAc...) asparagine glycan is attached at N1735. 10 Ig-like C2-type domains span residues 1853-1946, 1950-2041, 2046-2140, 2146-2239, 2242-2343, 2345-2432, 2440-2534, 2542-2630, 2637-2722, and 2733-2828; these read PQIL…LSVT, PQIL…IRLH, PPVI…LNVQ, ARIT…VDVV, PAKI…KVVT, PATI…KTVW, PKIN…LQLT, PIFH…RLVS, PEAN…PSVT, and PRIT…IHVF. Cystine bridges form between C1875/C1928 and C1972/C2025. N-linked (GlcNAc...) asparagine glycosylation is found at N2007 and N2056. Intrachain disulfides connect C2069–C2122, C2168–C2221, C2265–C2324, C2368–C2418, C2466–C2518, C2564–C2616, C2659–C2711, and C2755–C2810. An N-linked (GlcNAc...) asparagine glycan is attached at N2693.

Detected in placenta (at protein level). Detected in cerebrospinal fluid and fibroblasts (at protein level). Highly expressed in kidney, also detected on liver and spleen. Expressed by proximal tubular cells of the kidney (at protein level). Expression highly increases during chronic kidney disease and autosomal dominant polycystic kidney disease, where is detected in cysts.

The protein localises to the secreted. In kidney, has anti-inflammatory and anti-fibrotic properties by limiting the induction of chemokines, fibronectin and collagen expression in response to TGB1 and pro-inflammatory stimuli. The sequence is that of Matrix-remodeling-associated protein 5 (MXRA5) from Homo sapiens (Human).